Here is a 436-residue protein sequence, read N- to C-terminus: Prenyltransferase nscD (436 aa).

The protein belongs to the tryptophan dimethylallyltransferase family.

It functions in the pathway secondary metabolite biosynthesis. In terms of biological role, prenyltransferase; part of the gene cluster that mediates the biosynthesis of neosartoricin B, a prenylated anthracenone that probably exhibits T-cell antiproliferative activity, suggestive of a physiological role as an immunosuppressive agent. The non-reducing polyketide synthase nscA probably synthesizes and cyclizes the decaketide backbone. The hydrolase nscB then mediates the product release through hydrolysis followed by spontaneous decarboxylation. The prenyltransferase nscD catalyzes the addition of the dimethylallyl group to the aromatic C5. The FAD-dependent monooxygenase nscC is then responsible for the stereospecific hydroxylation at C2. Neosartoricin B can be converted into two additional compounds neosartoricins C and D. Neosartoricin C is a spirocyclic compound that is cyclized through the attack of C3 hydroxyl on C14, followed by dehydration. On the other hand, neosartoricin D is a further cyclized compound in which attack of C2 on C14 in neosartoricin C results in the formation of the acetal-containing dioxabicyclo-octanone ring. Both of these compounds are novel and possibly represent related metabolites of the gene cluster. The sequence is that of Prenyltransferase nscD from Arthroderma benhamiae (strain ATCC MYA-4681 / CBS 112371) (Trichophyton mentagrophytes).